Here is a 104-residue protein sequence, read N- to C-terminus: Secretoglobin family 3A member 1 (104 aa).

The N-terminal stretch at Met-1–Ala-20 is a signal peptide.

It belongs to the secretoglobin family. UGRP subfamily. As to quaternary structure, homodimer; disulfide-linked. In terms of tissue distribution, highly expressed in lung and prostate. Also found in mammary gland, spleen, pancreas, testis and liver. Detected throughout the airway epithelium in lung, with highest expression in large airways. Found in lung submucosal glands where it localizes to acinar and ductile cells. Not detected in respiratory bronchioles, alveolar ducts or alveolar epithelium. In mammary gland, specifically localizes to luminal epithelial cells.

The protein resides in the secreted. Secreted cytokine-like protein. Inhibits cell growth in vitro. In Homo sapiens (Human), this protein is Secretoglobin family 3A member 1 (SCGB3A1).